The following is a 310-amino-acid chain: tRNA uridine(34) hydroxylase (310 aa).

Residues 124-218 (SDPEVLLIDT…YFEEVPQEES (95 aa)) enclose the Rhodanese domain. Residue C178 is the Cysteine persulfide intermediate of the active site.

It belongs to the TrhO family.

The catalysed reaction is uridine(34) in tRNA + AH2 + O2 = 5-hydroxyuridine(34) in tRNA + A + H2O. Catalyzes oxygen-dependent 5-hydroxyuridine (ho5U) modification at position 34 in tRNAs. The chain is tRNA uridine(34) hydroxylase from Pseudomonas putida (strain GB-1).